The following is an 846-amino-acid chain: MAP7 domain-containing protein 1 (846 aa).

Disordered stretches follow at residues 1-153 and 186-210; these read MESG…ERAK and EQRLKAEQRRAALEERQRQKLEKNK. A compositionally biased stretch (pro residues) spans 24–41; it reads EPRPSPEGDPSPPPPPTP. Phosphothreonine is present on residues Thr-49 and Thr-53. Phosphoserine is present on Ser-95. Thr-99 bears the Phosphothreonine mark. Residues 113 to 123 are compositionally biased toward low complexity; it reads RSSQPSPTTVP. Ser-115 and Ser-118 each carry phosphoserine. Thr-120 carries the phosphothreonine modification. Phosphoserine is present on residues Ser-125 and Ser-127. The stretch at 130-224 forms a coiled coil; it reads AKQDVKKAGE…AAIQRSVKKT (95 aa). Residues 132–153 show a composition bias toward basic and acidic residues; the sequence is QDVKKAGERHKLAKERREERAK. A phosphoserine mark is found at Ser-256, Ser-275, Ser-315, Ser-368, and Ser-401. The tract at residues 318-816 is disordered; it reads TLPRNGRDQG…KGTAGDKSLG (499 aa). Basic and acidic residues predominate over residues 407–437; the sequence is RRLEATPVQKKEKKDKERENEKEKSALARER. Residues 414–443 are a coiled coil; that stretch reads VQKKEKKDKERENEKEKSALARERNLKKRQ. 4 positions are modified to phosphoserine: Ser-444, Ser-448, Ser-454, and Ser-460. Residues 460–471 are compositionally biased toward low complexity; the sequence is SPKSKARPSSPS. A Glycyl lysine isopeptide (Lys-Gly) (interchain with G-Cter in SUMO2) cross-link involves residue Lys-462. Phosphoserine is present on residues Ser-479 and Ser-496. Residues 479–497 show a composition bias toward pro residues; it reads SPCPSPGPGHALPPKPPSP. The segment covering 523 to 539 has biased composition (basic and acidic residues); it reads PEDKNHRKSRAAEEKEP. Pro residues predominate over residues 542 to 556; it reads PASPAPSPVPSPTPA. Phosphoserine is present on residues Ser-544, Ser-548, and Ser-552. Thr-554 is modified (phosphothreonine). Positions 568–579 are enriched in low complexity; it reads PAETAVPAVPAA. A coiled-coil region spans residues 599–740; the sequence is TTDREEATRL…AETKKQDAKE (142 aa). Over residues 600-740 the composition is skewed to basic and acidic residues; that stretch reads TDREEATRLL…AETKKQDAKE (141 aa). A Phosphothreonine modification is found at Thr-818.

Belongs to the MAP7 family.

The protein resides in the cytoplasm. Its subcellular location is the cytoskeleton. It is found in the spindle. It localises to the microtubule organizing center. The protein localises to the centrosome. The protein resides in the midbody. Microtubule-stabilizing protein involved in the control of cell motility and neurite outgrowth. Facilitate microtubule stabilization through the maintenance of acetylated stable microtubules. This Mus musculus (Mouse) protein is MAP7 domain-containing protein 1 (Map7d1).